The chain runs to 320 residues: 1-aminocyclopropane-1-carboxylate oxidase (320 aa).

In terms of domain architecture, Fe2OG dioxygenase spans 156-256 (PTFGTKVSNY…RMSIASFYNP (101 aa)). Fe cation-binding residues include histidine 180, aspartate 182, and histidine 237.

It belongs to the iron/ascorbate-dependent oxidoreductase family. Requires Fe cation as cofactor.

The enzyme catalyses 1-aminocyclopropane-1-carboxylate + L-ascorbate + O2 = ethene + L-dehydroascorbate + hydrogen cyanide + CO2 + 2 H2O. It functions in the pathway alkene biosynthesis; ethylene biosynthesis via S-adenosyl-L-methionine; ethylene from S-adenosyl-L-methionine: step 2/2. This is 1-aminocyclopropane-1-carboxylate oxidase (ACO) from Brassica juncea (Indian mustard).